Reading from the N-terminus, the 226-residue chain is Charged multivesicular body protein 4 (226 aa).

A coiled-coil region spans residues 22-88; the sequence is IQKLRETENM…DGTLSTIEMQ (67 aa). The disordered stretch occupies residues 169-226; sequence QENFDKEIIGIPEPTPTLPEAPTEDLPEKAKEKKKATTTTAVEDDDDPDMKQLLSWSN.

It belongs to the SNF7 family. Homopolymer; forms elongated striated filaments of uniform ~10nm width. Monomers interact in a staggered arrangement mediated by complementary charged electrostatic surfaces. Interacts with l(2)gd1 (via DM14 domains 1 and 3); the interaction is direct and blocks access to the surface involved in homopolymerization. This interaction may be required for the ESCRT-III complex role in multivesicular body formation. Expressed at considerably higher levels in testis than in ovary. Expressed in midgut, eye, mouthparts and male accessory gland.

Its subcellular location is the endosome. The protein localises to the multivesicular body. It is found in the midbody. With respect to regulation, may be regulated by aurB/Aurora kinase B-dependent phosphorylation. Functionally, probable core polymerisation component of the endosomal sorting required for transport (ESCRT) III complex involved in multiple cellular processes requiring the outward bending of membranes, including vesicle budding, membrane repair and cytokinesis. The ESCRT pathway involves 4 complexes (ESCRT-0, -I, -II and -III) that sequentially assemble on the cytoplasmic side of membranes and induce membrane remodeling, budding and scission. As part of the ESCRT-III complex, involved in the budding of intraluminal vesicles (ILVs) into endosomes to form multivesicular bodies (MVBs), which target their contents for degradation via the endolysosomal pathway. Involved in regulation of signal transduction pathways, including the Notch and BMP/decapentaplegic (dpp) pathways, by sequestering the intracellular domains of activated receptors into ILVs, isolating them from the cytoplasm and targeting them for lysosomal degradation. Involved in targeting ubiquitilated proteins, such as mono-ubiquitilanated N/Notch, to MVBs for degradation. Plays a role in wing development by regulating Notch signaling. Involved in abscission of germline cells during oogenesis. Involved in spermiogenesis. Required for efficient cytoplasmic isolation and abscission during cytokinesis of epithelial sensory organ precursor cells. May be involved in septate junction remodeling and maintenance. This Drosophila melanogaster (Fruit fly) protein is Charged multivesicular body protein 4.